The sequence spans 804 residues: DNA mismatch repair protein MutS (804 aa).

614-621 (GPNMAGKS) is a binding site for ATP.

It belongs to the DNA mismatch repair MutS family.

Functionally, this protein is involved in the repair of mismatches in DNA. It is possible that it carries out the mismatch recognition step. This protein has a weak ATPase activity. The protein is DNA mismatch repair protein MutS of Ehrlichia ruminantium (strain Gardel).